Here is a 139-residue protein sequence, read N- to C-terminus: Putative nickel-responsive regulator (139 aa).

Residues H79, H90, H92, and C98 each coordinate Ni(2+).

The protein belongs to the transcriptional regulatory CopG/NikR family. Ni(2+) serves as cofactor.

Transcriptional regulator. This is Putative nickel-responsive regulator from Anaeromyxobacter dehalogenans (strain 2CP-C).